The following is a 120-amino-acid chain: Large ribosomal subunit protein uL18 (120 aa).

Belongs to the universal ribosomal protein uL18 family. In terms of assembly, part of the 50S ribosomal subunit; part of the 5S rRNA/L5/L18/L25 subcomplex. Contacts the 5S and 23S rRNAs.

Its function is as follows. This is one of the proteins that bind and probably mediate the attachment of the 5S RNA into the large ribosomal subunit, where it forms part of the central protuberance. In Methylobacterium radiotolerans (strain ATCC 27329 / DSM 1819 / JCM 2831 / NBRC 15690 / NCIMB 10815 / 0-1), this protein is Large ribosomal subunit protein uL18.